Reading from the N-terminus, the 297-residue chain is Lipoyl synthase (297 aa).

7 residues coordinate [4Fe-4S] cluster: cysteine 34, cysteine 39, cysteine 45, cysteine 60, cysteine 64, cysteine 67, and serine 273. Residues 46 to 262 (WNKRHATVMI…KYVAYSKGFL (217 aa)) form the Radical SAM core domain.

It belongs to the radical SAM superfamily. Lipoyl synthase family. It depends on [4Fe-4S] cluster as a cofactor.

Its subcellular location is the cytoplasm. It carries out the reaction [[Fe-S] cluster scaffold protein carrying a second [4Fe-4S](2+) cluster] + N(6)-octanoyl-L-lysyl-[protein] + 2 oxidized [2Fe-2S]-[ferredoxin] + 2 S-adenosyl-L-methionine + 4 H(+) = [[Fe-S] cluster scaffold protein] + N(6)-[(R)-dihydrolipoyl]-L-lysyl-[protein] + 4 Fe(3+) + 2 hydrogen sulfide + 2 5'-deoxyadenosine + 2 L-methionine + 2 reduced [2Fe-2S]-[ferredoxin]. It participates in protein modification; protein lipoylation via endogenous pathway; protein N(6)-(lipoyl)lysine from octanoyl-[acyl-carrier-protein]: step 2/2. Functionally, catalyzes the radical-mediated insertion of two sulfur atoms into the C-6 and C-8 positions of the octanoyl moiety bound to the lipoyl domains of lipoate-dependent enzymes, thereby converting the octanoylated domains into lipoylated derivatives. The polypeptide is Lipoyl synthase (Ehrlichia chaffeensis (strain ATCC CRL-10679 / Arkansas)).